The following is a 265-amino-acid chain: Pancreas transcription factor 1 subunit alpha (265 aa).

The bHLH domain maps to 115–167; that stretch reads QLRQAANVRERRRMQSINDAFEGLRSHIPTLPYEKRLSKVDTLRLAIGYINFL.

It localises to the nucleus. Functionally, transcription factor implicated in the cell fate determination in various organs. Binds to the E-box consensus sequence 5'-CANNTG-3'. Required for exocrine pancreatic development. Plays a central role in directing the differentiation of retinal progenitors towards horizontal and amacrine fates. This chain is Pancreas transcription factor 1 subunit alpha (ptf1a), found in Danio rerio (Zebrafish).